A 543-amino-acid chain; its full sequence is Hydroxylamine reductase (543 aa).

Residues C5, C8, C17, and C23 each coordinate [4Fe-4S] cluster. The hybrid [4Fe-2O-2S] cluster site is built by H236, E260, C304, C398, C426, C451, E486, and K488. C398 is modified (cysteine persulfide).

The protein belongs to the HCP family. [4Fe-4S] cluster serves as cofactor. The cofactor is hybrid [4Fe-2O-2S] cluster.

It is found in the cytoplasm. It catalyses the reaction A + NH4(+) + H2O = hydroxylamine + AH2 + H(+). Functionally, catalyzes the reduction of hydroxylamine to form NH(3) and H(2)O. The polypeptide is Hydroxylamine reductase (Bacteroides thetaiotaomicron (strain ATCC 29148 / DSM 2079 / JCM 5827 / CCUG 10774 / NCTC 10582 / VPI-5482 / E50)).